The primary structure comprises 313 residues: HPr kinase/phosphorylase (313 aa).

Active-site residues include H140 and K161. 155-162 (GNSGAGKS) provides a ligand contact to ATP. S162 is a binding site for Mg(2+). D179 (proton acceptor; for phosphorylation activity. Proton donor; for dephosphorylation activity) is an active-site residue. The segment at 203-212 (IEVRGLGILN) is important for the catalytic mechanism of both phosphorylation and dephosphorylation. Residue E204 participates in Mg(2+) binding. Residue R246 is part of the active site. An important for the catalytic mechanism of dephosphorylation region spans residues 267–272 (PVAAGR).

This sequence belongs to the HPrK/P family. As to quaternary structure, homohexamer. Mg(2+) serves as cofactor.

It carries out the reaction [HPr protein]-L-serine + ATP = [HPr protein]-O-phospho-L-serine + ADP + H(+). The enzyme catalyses [HPr protein]-O-phospho-L-serine + phosphate + H(+) = [HPr protein]-L-serine + diphosphate. In terms of biological role, catalyzes the ATP- as well as the pyrophosphate-dependent phosphorylation of a specific serine residue in HPr, a phosphocarrier protein of the phosphoenolpyruvate-dependent sugar phosphotransferase system (PTS). HprK/P also catalyzes the pyrophosphate-producing, inorganic phosphate-dependent dephosphorylation (phosphorolysis) of seryl-phosphorylated HPr (P-Ser-HPr). This is HPr kinase/phosphorylase from Azoarcus sp. (strain BH72).